A 443-amino-acid polypeptide reads, in one-letter code: Serine/threonine-protein phosphatase 2A 55 kDa regulatory subunit B beta isoform (443 aa).

7 WD repeats span residues 22–61 (TEAD…KSQP), 87–128 (EIEE…KRPE), 171–209 (AHTY…RSFN), 220–260 (ELTE…LCDN), 279–317 (EIIS…KPLE), 334–375 (ENDC…DVTL), and 410–443 (DFSK…DKVN).

The protein belongs to the phosphatase 2A regulatory subunit B family. As to quaternary structure, PP2A consists of a common heterodimeric core enzyme, composed of a 36 kDa catalytic subunit (subunit C) and a 65 kDa constant regulatory subunit (PR65 or subunit A), that associates with a variety of regulatory subunits.

The protein localises to the cytoplasm. It is found in the cytoskeleton. It localises to the membrane. The B regulatory subunit might modulate substrate selectivity and catalytic activity, and might also direct the localization of the catalytic enzyme to a particular subcellular compartment. This is Serine/threonine-protein phosphatase 2A 55 kDa regulatory subunit B beta isoform (ppp2r2b) from Carassius auratus (Goldfish).